We begin with the raw amino-acid sequence, 131 residues long: MFDGIGFMELLLIGVLGLVVLGPERLPVAVRSISGWIRAMKKMANSVKDELEQELKIEQLHTDLKKAENQGLKNLAPELQDSIDQLKQAAESVNRPYQVEDAPSAKETPAKETATTETTSTENAKSDKPNG.

The chain crosses the membrane as a helical span at residues 2–22; the sequence is FDGIGFMELLLIGVLGLVVLG. Residues 69-131 are disordered; the sequence is NQGLKNLAPE…ENAKSDKPNG (63 aa). Residues 105 to 123 show a composition bias toward low complexity; sequence AKETPAKETATTETTSTEN.

It belongs to the TatB family. In terms of assembly, the Tat system comprises two distinct complexes: a TatABC complex, containing multiple copies of TatA, TatB and TatC subunits, and a separate TatA complex, containing only TatA subunits. Substrates initially bind to the TatABC complex, which probably triggers association of the separate TatA complex to form the active translocon.

It localises to the cell inner membrane. In terms of biological role, part of the twin-arginine translocation (Tat) system that transports large folded proteins containing a characteristic twin-arginine motif in their signal peptide across membranes. Together with TatC, TatB is part of a receptor directly interacting with Tat signal peptides. TatB may form an oligomeric binding site that transiently accommodates folded Tat precursor proteins before their translocation. This is Sec-independent protein translocase protein TatB from Shewanella piezotolerans (strain WP3 / JCM 13877).